Reading from the N-terminus, the 500-residue chain is Probable cytosol aminopeptidase (500 aa).

Positions 269 and 274 each coordinate Mn(2+). K281 is an active-site residue. Mn(2+) contacts are provided by D292, D351, and E353. Residue R355 is part of the active site.

Belongs to the peptidase M17 family. It depends on Mn(2+) as a cofactor.

Its subcellular location is the cytoplasm. The catalysed reaction is Release of an N-terminal amino acid, Xaa-|-Yaa-, in which Xaa is preferably Leu, but may be other amino acids including Pro although not Arg or Lys, and Yaa may be Pro. Amino acid amides and methyl esters are also readily hydrolyzed, but rates on arylamides are exceedingly low.. It catalyses the reaction Release of an N-terminal amino acid, preferentially leucine, but not glutamic or aspartic acids.. In terms of biological role, presumably involved in the processing and regular turnover of intracellular proteins. Catalyzes the removal of unsubstituted N-terminal amino acids from various peptides. This Acidithiobacillus ferrooxidans (strain ATCC 23270 / DSM 14882 / CIP 104768 / NCIMB 8455) (Ferrobacillus ferrooxidans (strain ATCC 23270)) protein is Probable cytosol aminopeptidase.